The sequence spans 311 residues: Aspartate carbamoyltransferase catalytic subunit (311 aa).

Carbamoyl phosphate contacts are provided by Arg55 and Thr56. Residue Lys85 participates in L-aspartate binding. The carbamoyl phosphate site is built by Arg106, His134, and Gln137. L-aspartate is bound by residues Arg167 and Arg228. 2 residues coordinate carbamoyl phosphate: Leu266 and Pro267.

Belongs to the aspartate/ornithine carbamoyltransferase superfamily. ATCase family. As to quaternary structure, heterododecamer (2C3:3R2) of six catalytic PyrB chains organized as two trimers (C3), and six regulatory PyrI chains organized as three dimers (R2).

The catalysed reaction is carbamoyl phosphate + L-aspartate = N-carbamoyl-L-aspartate + phosphate + H(+). The protein operates within pyrimidine metabolism; UMP biosynthesis via de novo pathway; (S)-dihydroorotate from bicarbonate: step 2/3. Catalyzes the condensation of carbamoyl phosphate and aspartate to form carbamoyl aspartate and inorganic phosphate, the committed step in the de novo pyrimidine nucleotide biosynthesis pathway. The protein is Aspartate carbamoyltransferase catalytic subunit of Psychromonas ingrahamii (strain DSM 17664 / CCUG 51855 / 37).